A 623-amino-acid chain; its full sequence is E3 ubiquitin-protein ligase DTX1 (623 aa).

2 WWE domains span residues histidine 13 to arginine 93 and asparagine 94 to arginine 170. Positions lysine 224 to alanine 319 are disordered. Pro residues predominate over residues serine 227–histidine 242. Polar residues predominate over residues glycine 292 to alanine 311. The segment at cysteine 413–lysine 474 adopts an RING-type zinc-finger fold.

Belongs to the Deltex family. In terms of assembly, may form a homo- or heterodimer with other members of the Deltex family. Probably interacts with Notch1. Specifically expressed in regions undergoing neuronal differentiation. Mainly colocalizes with Notch1.

The catalysed reaction is S-ubiquitinyl-[E2 ubiquitin-conjugating enzyme]-L-cysteine + [acceptor protein]-L-lysine = [E2 ubiquitin-conjugating enzyme]-L-cysteine + N(6)-ubiquitinyl-[acceptor protein]-L-lysine.. It functions in the pathway protein modification; protein ubiquitination. Functionally, regulator of Notch signaling, a signaling pathway involved in cell-cell communications that regulates a broad spectrum of cell-fate determinations. Probably acts both as a positive and negative regulator of Notch, depending on the developmental and cell context. Functions as a ubiquitin ligase protein in vivo, mediating ubiquitination and promoting degradation of MEKK1, suggesting that it may regulate the Notch pathway via some ubiquitin ligase activity. This Xenopus laevis (African clawed frog) protein is E3 ubiquitin-protein ligase DTX1 (dtx1).